A 317-amino-acid chain; its full sequence is Ribosomal RNA small subunit methyltransferase H (317 aa).

S-adenosyl-L-methionine-binding positions include 30 to 32, Asp50, Tyr78, Asp95, and Gln102; that span reads GGH.

The protein belongs to the methyltransferase superfamily. RsmH family.

It is found in the cytoplasm. It catalyses the reaction cytidine(1402) in 16S rRNA + S-adenosyl-L-methionine = N(4)-methylcytidine(1402) in 16S rRNA + S-adenosyl-L-homocysteine + H(+). In terms of biological role, specifically methylates the N4 position of cytidine in position 1402 (C1402) of 16S rRNA. The protein is Ribosomal RNA small subunit methyltransferase H of Nitrosomonas eutropha (strain DSM 101675 / C91 / Nm57).